The sequence spans 1293 residues: Receptor-type tyrosine-protein phosphatase C (1293 aa).

Residues 1 to 25 (MTMGLWLKLLAFGFALLDTEVFVTG) form the signal peptide. The Extracellular segment spans residues 26–566 (QTPTPSDELS…RNESTNFNAK (541 aa)). The segment at 43 to 174 (LPQSDPLPAR…STTDISSGAS (132 aa)) is disordered. Composition is skewed to polar residues over residues 53 to 72 (TTES…SETT), 88 to 110 (QPDS…QADN), and 149 to 169 (LARN…TTDI). A glycan (N-linked (GlcNAc...) asparagine) is linked at Asn66. Residues Asn152, Asn163, Asn209, Asn213, Asn220, Asn255, Asn260, Asn292, Asn313, Asn324, Asn349, Asn418, Asn429, Asn459, and Asn491 are each glycosylated (N-linked (GlcNAc...) asparagine). 2 consecutive Fibronectin type-III domains span residues 376–472 (IPET…TKAD) and 473–568 (RPDK…AKAL). Residues 567 to 588 (ALIIFLVFLIIVTSIALLVVLY) form a helical membrane-spanning segment. Over 589-1293 (KIYDLRKKRS…SASPAPTQSS (705 aa)) the chain is Cytoplasmic. 2 consecutive Tyrosine-protein phosphatase domains span residues 642-901 (FLAE…LVEY) and 933-1216 (LEAE…IASI). Position 672 is a phosphotyrosine (Tyr672). Residues Asp810, 842-848 (CSAGVGR), and Gln886 each bind substrate. Cys842 (phosphocysteine intermediate) is an active-site residue. Phosphoserine is present on residues Ser964, Ser983, Ser986, Ser990, Ser993, Ser994, and Ser998. The interval 980 to 1003 (LEMSKESEPESDESSDDDSDSEET) is disordered. The span at 988–1001 (PESDESSDDDSDSE) shows a compositional bias: acidic residues. Cys1157 (phosphocysteine intermediate) is an active-site residue. A Phosphoserine modification is found at Ser1229. The segment at 1240–1293 (DGGKQDANCVRPDGPLNKAQEDSRGVGTPEPTNSAEEPEHAANGSASPAPTQSS) is disordered. Thr1267 carries the post-translational modification Phosphothreonine. Positions 1283 to 1293 (GSASPAPTQSS) are enriched in polar residues. Ser1286 carries the post-translational modification Phosphoserine.

Belongs to the protein-tyrosine phosphatase family. Receptor class 1/6 subfamily. As to quaternary structure, interacts with SKAP1. Interacts with DPP4; the interaction is enhanced in an interleukin-12-dependent manner in activated lymphocytes. Binds GANAB and PRKCSH. Interacts with CD53; this interaction stabilizes PTPRC on the membrane and is required for optimal phosphatase activity. Interacts with CLEC10A. In terms of processing, heavily N- and O-glycosylated.

Its subcellular location is the cell membrane. It localises to the membrane raft. The protein resides in the synapse. The enzyme catalyses O-phospho-L-tyrosyl-[protein] + H2O = L-tyrosyl-[protein] + phosphate. Functionally, protein tyrosine-protein phosphatase required for T-cell activation through the antigen receptor. Acts as a positive regulator of T-cell coactivation upon binding to DPP4. The first PTPase domain has enzymatic activity, while the second one seems to affect the substrate specificity of the first one. Upon T-cell activation, recruits and dephosphorylates SKAP1 and FYN. Dephosphorylates LYN, and thereby modulates LYN activity. Interacts with CLEC10A at antigen presenting cell-T cell contact; CLEC10A on immature dendritic cells recognizes Tn antigen-carrying PTPRC/CD45 receptor on effector T cells and modulates T cell activation threshold to limit autoreactivity. The chain is Receptor-type tyrosine-protein phosphatase C from Mus musculus (Mouse).